A 586-amino-acid polypeptide reads, in one-letter code: Arginine--tRNA ligase (586 aa).

A 'HIGH' region motif is present at residues 131–141 (ANPTGPLHVGH).

Belongs to the class-I aminoacyl-tRNA synthetase family. Monomer.

The protein localises to the cytoplasm. It carries out the reaction tRNA(Arg) + L-arginine + ATP = L-arginyl-tRNA(Arg) + AMP + diphosphate. The chain is Arginine--tRNA ligase from Nitrosomonas eutropha (strain DSM 101675 / C91 / Nm57).